Here is a 109-residue protein sequence, read N- to C-terminus: Fluoride-specific ion channel FluC (109 aa).

3 consecutive transmembrane segments (helical) span residues Phe21–Ile41, Ile52–Tyr72, and Leu83–Leu103.

This sequence belongs to the fluoride channel Fluc/FEX (TC 1.A.43) family.

It is found in the cell inner membrane. It carries out the reaction fluoride(in) = fluoride(out). Functionally, fluoride-specific ion channel. Important for reducing fluoride concentration in the cell, thus reducing its toxicity. This chain is Fluoride-specific ion channel FluC, found in Prochlorococcus marinus (strain MIT 9515).